Reading from the N-terminus, the 506-residue chain is Maturase K (506 aa).

It belongs to the intron maturase 2 family. MatK subfamily.

Its subcellular location is the plastid. It localises to the chloroplast. Functionally, usually encoded in the trnK tRNA gene intron. Probably assists in splicing its own and other chloroplast group II introns. The polypeptide is Maturase K (Austrosteenisia blackii (Blood vine)).